We begin with the raw amino-acid sequence, 421 residues long: ATP-dependent RNA helicase RhlB (421 aa).

The short motif at 9–37 (QKFSDFALHPKVVEALEKKGFHNCTPIQA) is the Q motif element. Residues 40-219 (LPLTLAGRDV…FEQMNNAEYI (180 aa)) enclose the Helicase ATP-binding domain. Residue 53-60 (AQTGTGKT) coordinates ATP. The short motif at 165 to 168 (DEAD) is the DEAD box element. Residues 245-390 (RLLQTLIEEE…VSKYNPDALM (146 aa)) enclose the Helicase C-terminal domain. A disordered region spans residues 392 to 421 (DLPKPLRLTRPRTGNGPRRTGAPRNRRRSG). The segment covering 402–414 (PRTGNGPRRTGAP) has biased composition (low complexity).

The protein belongs to the DEAD box helicase family. RhlB subfamily. In terms of assembly, component of the RNA degradosome, which is a multiprotein complex involved in RNA processing and mRNA degradation.

The protein localises to the cytoplasm. The catalysed reaction is ATP + H2O = ADP + phosphate + H(+). Functionally, DEAD-box RNA helicase involved in RNA degradation. Has RNA-dependent ATPase activity and unwinds double-stranded RNA. This chain is ATP-dependent RNA helicase RhlB, found in Escherichia coli (strain SMS-3-5 / SECEC).